A 243-amino-acid chain; its full sequence is Transcription factor TFIIS homolog (243 aa).

The region spanning 77-201 (MRDIIQMMFF…SQQKVAEKTS (125 aa)) is the TFIIS central domain. The TFIIS-type zinc-finger motif lies at 202–242 (QLYKCPNCKQRMCTYREVQTRALDEPSTIFCTCKKCGHEFI). Zn(2+) is bound by residues cysteine 206, cysteine 209, cysteine 234, and cysteine 237.

Belongs to the TFS-II family.

Its function is as follows. Putative initiation factor. Necessary for efficient transcription elongation past template-encoded arresting sites. The polypeptide is Transcription factor TFIIS homolog (Ornithodoros (relapsing fever ticks)).